The primary structure comprises 202 residues: ATP-dependent Clp protease proteolytic subunit (202 aa).

Ser106 functions as the Nucleophile in the catalytic mechanism. His131 is an active-site residue.

Belongs to the peptidase S14 family. As to quaternary structure, fourteen ClpP subunits assemble into 2 heptameric rings which stack back to back to give a disk-like structure with a central cavity, resembling the structure of eukaryotic proteasomes.

It is found in the cytoplasm. The catalysed reaction is Hydrolysis of proteins to small peptides in the presence of ATP and magnesium. alpha-casein is the usual test substrate. In the absence of ATP, only oligopeptides shorter than five residues are hydrolyzed (such as succinyl-Leu-Tyr-|-NHMec, and Leu-Tyr-Leu-|-Tyr-Trp, in which cleavage of the -Tyr-|-Leu- and -Tyr-|-Trp bonds also occurs).. Functionally, cleaves peptides in various proteins in a process that requires ATP hydrolysis. Has a chymotrypsin-like activity. Plays a major role in the degradation of misfolded proteins. This chain is ATP-dependent Clp protease proteolytic subunit, found in Acidovorax ebreus (strain TPSY) (Diaphorobacter sp. (strain TPSY)).